A 229-amino-acid chain; its full sequence is Aldehyde oxidoreductase iron-sulfur-binding subunit PaoA (229 aa).

Residues 1–21 (MSNQGEYPEDNRVGKHEPHDL) are disordered. Positions 1–53 (MSNQGEYPEDNRVGKHEPHDLSLTRRDLIKVSAATAATAVVYPHSTLAASVPA) form a signal peptide, tat-type signal. Over residues 9–21 (EDNRVGKHEPHDL) the composition is skewed to basic and acidic residues. The region spanning 61–137 (MPLTLKVNGK…GAEITTIEGL (77 aa)) is the 2Fe-2S ferredoxin-type domain. Cys-99, Cys-104, Gly-105, Cys-107, Cys-119, Cys-158, Cys-161, Cys-208, and Cys-210 together coordinate [2Fe-2S] cluster.

In terms of assembly, heterotrimer composed of PaoA, PaoB and PaoC. [2Fe-2S] cluster is required as a cofactor. In terms of processing, exported by the Tat system. The position of the signal peptide cleavage has not been experimentally proven.

It is found in the periplasm. It catalyses the reaction an aldehyde + A + H2O = a carboxylate + AH2 + H(+). With respect to regulation, the complex requires PaoD for activity. In terms of biological role, oxidizes aldehydes to the corresponding carboxylic acids with a preference for aromatic aldehydes. It might play a role in the detoxification of aldehydes to avoid cell damage. This is Aldehyde oxidoreductase iron-sulfur-binding subunit PaoA from Escherichia coli (strain K12).